The sequence spans 100 residues: Large ribosomal subunit protein uL23 (100 aa).

This sequence belongs to the universal ribosomal protein uL23 family. In terms of assembly, part of the 50S ribosomal subunit. Contacts protein L29, and trigger factor when it is bound to the ribosome.

Functionally, one of the early assembly proteins it binds 23S rRNA. One of the proteins that surrounds the polypeptide exit tunnel on the outside of the ribosome. Forms the main docking site for trigger factor binding to the ribosome. In Synechococcus sp. (strain CC9311), this protein is Large ribosomal subunit protein uL23.